The chain runs to 193 residues: Phosphoheptose isomerase (193 aa).

In terms of domain architecture, SIS spans 37 to 193 (LADSFKAGGK…QLIEKEMVKA (157 aa)). 52–54 (NGG) serves as a coordination point for substrate. Positions 61 and 65 each coordinate Zn(2+). Residues Glu-65, 93-94 (ND), 119-121 (STS), Ser-124, and Gln-172 contribute to the substrate site. Gln-172 and His-180 together coordinate Zn(2+).

The protein belongs to the SIS family. GmhA subfamily. In terms of assembly, homotetramer. The cofactor is Zn(2+).

Its subcellular location is the cytoplasm. It carries out the reaction 2 D-sedoheptulose 7-phosphate = D-glycero-alpha-D-manno-heptose 7-phosphate + D-glycero-beta-D-manno-heptose 7-phosphate. It functions in the pathway carbohydrate biosynthesis; D-glycero-D-manno-heptose 7-phosphate biosynthesis; D-glycero-alpha-D-manno-heptose 7-phosphate and D-glycero-beta-D-manno-heptose 7-phosphate from sedoheptulose 7-phosphate: step 1/1. It participates in bacterial outer membrane biogenesis; LPS core biosynthesis. Its function is as follows. Catalyzes the isomerization of sedoheptulose 7-phosphate in D-glycero-D-manno-heptose 7-phosphate. The chain is Phosphoheptose isomerase from Yersinia pestis.